A 322-amino-acid polypeptide reads, in one-letter code: Large ribosomal subunit protein uL10 (322 aa).

Residues 294 to 322 form a disordered region; the sequence is APAAAAKAEKEEEPAEESDDEMGFGLFDE. The segment covering 304-322 has biased composition (acidic residues); it reads EEEPAEESDDEMGFGLFDE.

Belongs to the universal ribosomal protein uL10 family. In terms of assembly, P0 forms a pentameric complex by interaction with dimers of P1 and P2. In terms of processing, phosphorylated.

Its function is as follows. Ribosomal protein P0 is the functional equivalent of E.coli protein L10. The sequence is that of Large ribosomal subunit protein uL10 from Lupinus luteus (European yellow lupine).